Here is a 255-residue protein sequence, read N- to C-terminus: tRNA (guanine-N(1)-)-methyltransferase (255 aa).

S-adenosyl-L-methionine contacts are provided by residues glycine 113 and 133-138; that span reads IGDYVL.

The protein belongs to the RNA methyltransferase TrmD family. In terms of assembly, homodimer.

It is found in the cytoplasm. It carries out the reaction guanosine(37) in tRNA + S-adenosyl-L-methionine = N(1)-methylguanosine(37) in tRNA + S-adenosyl-L-homocysteine + H(+). Its function is as follows. Specifically methylates guanosine-37 in various tRNAs. The protein is tRNA (guanine-N(1)-)-methyltransferase of Klebsiella pneumoniae (strain 342).